The chain runs to 295 residues: MDQKQIEEIVRSVMASMGQAAPAPSEAKCAATTCAAPVTSESCALDLGSAEAKAWIGVENPHRADVLTELRRSTVARVCTGRAGPRPRTQALLRFLADHSRSKDTVLKEVPEEWVKAQGLLEVRSEISNKNLYLTRPDMGRRLCAEAVEALKAQCVANPDVQVVISDGLSTDAITVNYEEILPPLMAGLKQAGLKVGTPFFVRYGRVKIEDQIGEILGAKVVILLVGERPGLGQSESLSCYAVYSPRMATTVEADRTCISNIHQGGTPPVEAAAVIVDLAKRMLEQKASGINMTR.

Adenosylcob(III)alamin contacts are provided by V207, E228, and C258.

Belongs to the EutC family. As to quaternary structure, the basic unit is a heterodimer which dimerizes to form tetramers. The heterotetramers trimerize; 6 large subunits form a core ring with 6 small subunits projecting outwards. Adenosylcob(III)alamin serves as cofactor.

It is found in the bacterial microcompartment. It carries out the reaction ethanolamine = acetaldehyde + NH4(+). It participates in amine and polyamine degradation; ethanolamine degradation. Catalyzes the deamination of various vicinal amino-alcohols to oxo compounds. Allows this organism to utilize ethanolamine as the sole source of nitrogen and carbon in the presence of external vitamin B12. The sequence is that of Ethanolamine ammonia-lyase small subunit from Escherichia coli (strain SE11).